The following is a 303-amino-acid chain: Thyrotroph embryonic factor (303 aa).

Disordered regions lie at residues 1-63 and 132-176; these read MSDA…KLEE and ESAS…DPNC. Phosphoserine is present on Ser-32. The segment covering 41 to 61 has biased composition (basic and acidic residues); sequence KLMENPPREARLDKEKGKEKL. The segment covering 133 to 160 has biased composition (low complexity); sequence SASSSTASPPSSSTAIFQPSETVSSTES. Positions 233–296 constitute a bZIP domain; it reads DEKYWTRRKK…GKCKTIVSKY (64 aa). The segment at 235–255 is basic motif; the sequence is KYWTRRKKNNVAAKRSRDARR. Residues 256-263 form a leucine-zipper region; it reads LKENQITI.

This sequence belongs to the bZIP family. PAR subfamily. As to quaternary structure, binds DNA as a homodimer or a heterodimer. Can form a heterodimer with DBP.

The protein resides in the nucleus. In terms of biological role, transcription factor that binds to and transactivates the TSHB promoter. Binds to a minimal DNA-binding sequence 5'-[TC][AG][AG]TTA[TC][AG]-3'. The sequence is that of Thyrotroph embryonic factor (TEF) from Homo sapiens (Human).